The sequence spans 145 residues: Large ribosomal subunit protein uL15 (145 aa).

Basic residues-rich tracts occupy residues 1–13 (MVRERTKKLRGGH) and 19–29 (KAGRGKGKKGG). Residues 1–33 (MVRERTKKLRGGHYGRGMKAGRGKGKKGGRGNA) form a disordered region.

It belongs to the universal ribosomal protein uL15 family. As to quaternary structure, part of the 50S ribosomal subunit.

Its function is as follows. Binds to the 23S rRNA. This is Large ribosomal subunit protein uL15 from Thermoplasma volcanium (strain ATCC 51530 / DSM 4299 / JCM 9571 / NBRC 15438 / GSS1).